Consider the following 165-residue polypeptide: NAD(P)H-quinone oxidoreductase subunit I, chloroplastic (165 aa).

4Fe-4S ferredoxin-type domains lie at 55 to 84 and 95 to 124; these read GRIHFEFDKCIACEVCVRVCPINLPVVDWE and KSYSIDFGVCIFCGNCVEYCPTNCLSMTEE. Residues Cys-64, Cys-67, Cys-70, Cys-74, Cys-104, Cys-107, Cys-110, and Cys-114 each contribute to the [4Fe-4S] cluster site.

It belongs to the complex I 23 kDa subunit family. In terms of assembly, NDH is composed of at least 16 different subunits, 5 of which are encoded in the nucleus. [4Fe-4S] cluster serves as cofactor.

Its subcellular location is the plastid. The protein resides in the chloroplast thylakoid membrane. The enzyme catalyses a plastoquinone + NADH + (n+1) H(+)(in) = a plastoquinol + NAD(+) + n H(+)(out). It catalyses the reaction a plastoquinone + NADPH + (n+1) H(+)(in) = a plastoquinol + NADP(+) + n H(+)(out). In terms of biological role, NDH shuttles electrons from NAD(P)H:plastoquinone, via FMN and iron-sulfur (Fe-S) centers, to quinones in the photosynthetic chain and possibly in a chloroplast respiratory chain. The immediate electron acceptor for the enzyme in this species is believed to be plastoquinone. Couples the redox reaction to proton translocation, and thus conserves the redox energy in a proton gradient. This chain is NAD(P)H-quinone oxidoreductase subunit I, chloroplastic, found in Psilotum nudum (Whisk fern).